Consider the following 1060-residue polypeptide: DNA-directed RNA polymerase subunit beta (1060 aa).

This sequence belongs to the RNA polymerase beta chain family. In terms of assembly, in plastids the minimal PEP RNA polymerase catalytic core is composed of four subunits: alpha, beta, beta', and beta''. When a (nuclear-encoded) sigma factor is associated with the core the holoenzyme is formed, which can initiate transcription.

It is found in the plastid. Its subcellular location is the chloroplast. It carries out the reaction RNA(n) + a ribonucleoside 5'-triphosphate = RNA(n+1) + diphosphate. Its function is as follows. DNA-dependent RNA polymerase catalyzes the transcription of DNA into RNA using the four ribonucleoside triphosphates as substrates. The sequence is that of DNA-directed RNA polymerase subunit beta from Lactuca sativa (Garden lettuce).